The chain runs to 465 residues: ATP synthase subunit beta (465 aa).

Residue 154-161 coordinates ATP; it reads GGAGVGKT.

It belongs to the ATPase alpha/beta chains family. As to quaternary structure, F-type ATPases have 2 components, CF(1) - the catalytic core - and CF(0) - the membrane proton channel. CF(1) has five subunits: alpha(3), beta(3), gamma(1), delta(1), epsilon(1). CF(0) has three main subunits: a(1), b(2) and c(9-12). The alpha and beta chains form an alternating ring which encloses part of the gamma chain. CF(1) is attached to CF(0) by a central stalk formed by the gamma and epsilon chains, while a peripheral stalk is formed by the delta and b chains.

The protein localises to the cell inner membrane. It carries out the reaction ATP + H2O + 4 H(+)(in) = ADP + phosphate + 5 H(+)(out). Functionally, produces ATP from ADP in the presence of a proton gradient across the membrane. The catalytic sites are hosted primarily by the beta subunits. This is ATP synthase subunit beta from Methylobacillus flagellatus (strain ATCC 51484 / DSM 6875 / VKM B-1610 / KT).